Reading from the N-terminus, the 111-residue chain is Probable 4-amino-4-deoxy-L-arabinose-phosphoundecaprenol flippase subunit ArnE (111 aa).

Over Met1–Ala37 the chain is Cytoplasmic. Residues Leu38 to Leu58 traverse the membrane as a helical segment. An EamA domain is found at Leu40 to Ser109. The Periplasmic segment spans residues Gln59–Thr60. Residues Val61–Ala81 traverse the membrane as a helical segment. Over Thr82–Glu87 the chain is Cytoplasmic. The chain crosses the membrane as a helical span at residues Pro88–Gly108. Topologically, residues Ser109–Val111 are periplasmic.

Belongs to the ArnE family. Heterodimer of ArnE and ArnF.

It localises to the cell inner membrane. It functions in the pathway bacterial outer membrane biogenesis; lipopolysaccharide biosynthesis. In terms of biological role, translocates 4-amino-4-deoxy-L-arabinose-phosphoundecaprenol (alpha-L-Ara4N-phosphoundecaprenol) from the cytoplasmic to the periplasmic side of the inner membrane. The protein is Probable 4-amino-4-deoxy-L-arabinose-phosphoundecaprenol flippase subunit ArnE of Escherichia fergusonii (strain ATCC 35469 / DSM 13698 / CCUG 18766 / IAM 14443 / JCM 21226 / LMG 7866 / NBRC 102419 / NCTC 12128 / CDC 0568-73).